We begin with the raw amino-acid sequence, 111 residues long: Flagellar hook-basal body complex protein FliE (111 aa).

The protein belongs to the FliE family.

The protein resides in the bacterial flagellum basal body. The polypeptide is Flagellar hook-basal body complex protein FliE (Brucella abortus (strain S19)).